Reading from the N-terminus, the 483-residue chain is E3 ubiquitin-protein ligase TRIM50 (483 aa).

An RING-type zinc finger spans residues 16-57; it reads CPICLEVFKEPLMLQCGHSYCKDCLDNLSQHLDSELCCPVCR. The segment at 84-125 adopts a B box-type zinc-finger fold; sequence IEPTVCVHHRNPLSLFCEKDQEFICGLCGLLGSHQHHRVTPV. Cys89, His92, Cys111, and His117 together coordinate Zn(2+). Coiled-coil stretches lie at residues 127 to 169 and 203 to 236; these read TVYS…NESD and GLVASLDMQLEQAQGTQERLAQAEQVLEQFGNES. The region spanning 275–474 is the B30.2/SPRY domain; it reads DIKLTVWKRL…LPMVLPPPSG (200 aa). Position 372 is an N6-acetyllysine (Lys372).

Belongs to the TRIM/RBCC family. In terms of assembly, can form dimers and trimers. Interacts with several E2 ubiquitin-conjugating enzymes, including UBE2L6, UBE2E1, UBE2E3. No interaction with UBE2H. Interacts with BECN1. Interacts with SQSTM1. Interacts with NLRP3. In terms of processing, auto-ubiquitinated. Post-translationally, acetylated by EP300 and KAT2B. HDAC6 drives TRIM50 deacetylation. Acetylation antagonizes with TRIM50 ubiquitination. In terms of tissue distribution, expressed in the stomach.

It is found in the cytoplasm. The catalysed reaction is S-ubiquitinyl-[E2 ubiquitin-conjugating enzyme]-L-cysteine + [acceptor protein]-L-lysine = [E2 ubiquitin-conjugating enzyme]-L-cysteine + N(6)-ubiquitinyl-[acceptor protein]-L-lysine.. Functionally, E3 ubiquitin-protein ligase that ubiquitinates Beclin-1/BECN1 in a 'Lys-63'-dependent manner enhancing its binding to ULK1. In turn, promotes starvation-induced autophagy activation. Also interacts with p62/SQSTM1 protein and thereby induces the formation and the autophagy clearance of aggresome-associated polyubiquitinated proteins through HDAC6 interaction. Also promotes NLRP3 inflammasome activation by directly inducing NLRP3 oligomerization independent of its E3 ligase function. This chain is E3 ubiquitin-protein ligase TRIM50 (Trim50), found in Mus musculus (Mouse).